The sequence spans 477 residues: Bifunctional protein HldE (477 aa).

The tract at residues 1–318 (MKVTLPEFER…ENAVRGRAET (318 aa)) is ribokinase. 195 to 198 (NLSE) is an ATP binding site. D264 is an active-site residue. Residues 344–477 (MTNGVFDILH…IKKIQKDSDK (134 aa)) form a cytidylyltransferase region.

This sequence in the N-terminal section; belongs to the carbohydrate kinase PfkB family. In the C-terminal section; belongs to the cytidylyltransferase family. In terms of assembly, homodimer.

The catalysed reaction is D-glycero-beta-D-manno-heptose 7-phosphate + ATP = D-glycero-beta-D-manno-heptose 1,7-bisphosphate + ADP + H(+). The enzyme catalyses D-glycero-beta-D-manno-heptose 1-phosphate + ATP + H(+) = ADP-D-glycero-beta-D-manno-heptose + diphosphate. It participates in nucleotide-sugar biosynthesis; ADP-L-glycero-beta-D-manno-heptose biosynthesis; ADP-L-glycero-beta-D-manno-heptose from D-glycero-beta-D-manno-heptose 7-phosphate: step 1/4. The protein operates within nucleotide-sugar biosynthesis; ADP-L-glycero-beta-D-manno-heptose biosynthesis; ADP-L-glycero-beta-D-manno-heptose from D-glycero-beta-D-manno-heptose 7-phosphate: step 3/4. Functionally, catalyzes the phosphorylation of D-glycero-D-manno-heptose 7-phosphate at the C-1 position to selectively form D-glycero-beta-D-manno-heptose-1,7-bisphosphate. Catalyzes the ADP transfer from ATP to D-glycero-beta-D-manno-heptose 1-phosphate, yielding ADP-D-glycero-beta-D-manno-heptose. The sequence is that of Bifunctional protein HldE from Klebsiella pneumoniae (strain 342).